The primary structure comprises 174 residues: Secretory-abundant heat soluble protein 2 (174 aa).

The signal sequence occupies residues 1–19 (MHRFVLALVVFAGAAIVWA). Residues 30 to 60 (EWTGKPWMGKWESDPSKDENVEEFKKKLQLP) are SAHS-c1. The segment at 77 to 105 (YKKGDEYHHKIIINDAHYKNDIVFKLGQE) is SAHS-c2. Asn111 is a glycosylation site (N-linked (GlcNAc...) asparagine). Positions 118-172 (KYEDKDGALVGSVHYTGTKEQSLDKTINNVFKLEGDHLVKTSTIEGVTMKRHYNK) are SAHS-c3.

This sequence belongs to the Secretory-abundant heat soluble protein (SAHS) family.

It localises to the secreted. Its function is as follows. Secreted heat soluble protein acting as a molecular shield in water-deficient condition. Tardigrade-specific intrinsically disordered proteins (TDPs) are essential for desiccation tolerance by forming non-crystalline amorphous solids upon desiccation, and this vitrified state mirrors their protective capabilities. The sequence is that of Secretory-abundant heat soluble protein 2 from Ramazzottius varieornatus (Water bear).